Consider the following 336-residue polypeptide: Dihydroorotate dehydrogenase (quinone) (336 aa).

FMN contacts are provided by residues Ala-62–Lys-66 and Thr-86. Lys-66 provides a ligand contact to substrate. Asn-111–Phe-115 serves as a coordination point for substrate. Residues Asn-139 and Asn-172 each contribute to the FMN site. Asn-172 is a binding site for substrate. The Nucleophile role is filled by Ser-175. Asn-177 contacts substrate. FMN-binding residues include Lys-217 and Thr-245. Asn-246–Thr-247 lines the substrate pocket. FMN contacts are provided by residues Gly-268, Gly-297, and Tyr-318–Ser-319.

It belongs to the dihydroorotate dehydrogenase family. Type 2 subfamily. In terms of assembly, monomer. FMN is required as a cofactor.

The protein resides in the cell membrane. It catalyses the reaction (S)-dihydroorotate + a quinone = orotate + a quinol. It participates in pyrimidine metabolism; UMP biosynthesis via de novo pathway; orotate from (S)-dihydroorotate (quinone route): step 1/1. Catalyzes the conversion of dihydroorotate to orotate with quinone as electron acceptor. The sequence is that of Dihydroorotate dehydrogenase (quinone) from Cronobacter sakazakii (strain ATCC BAA-894) (Enterobacter sakazakii).